A 273-amino-acid chain; its full sequence is FALAHMVNDLEMVDEFVGKGANGLEIDVTFSSSGQPQYTYHGVPCDCFRSCKRREDFDTYIKYIRHLTTPGDPKFRSNLIMLIFDLKLNGLSQDALRKAGVEMADKLVGNYWQDLAEARAYIVLSMPSIEQSAFVTAFKDELKDFGYDKNLDRIGYDFSGNEDLDETAKVYKQLNINGHIWQADGITNCLPRGDSRLKEAISKRDTPGYQYINKVYTWTIDKASSIANALRLGVDGVMTNYPERVIDALNDSEFSGKFRLATYEDNPWETFKG.

His5 is a catalytic residue. Mg(2+)-binding residues include Glu25 and Asp27. The active-site Nucleophile is His41. 2 disulfide bridges follow: Cys45-Cys51 and Cys47-Cys189. Asp85 serves as a coordination point for Mg(2+).

This sequence belongs to the arthropod phospholipase D family. Class II subfamily. Requires Mg(2+) as cofactor. As to expression, expressed by the venom gland.

It is found in the secreted. It carries out the reaction an N-(acyl)-sphingosylphosphocholine = an N-(acyl)-sphingosyl-1,3-cyclic phosphate + choline. It catalyses the reaction an N-(acyl)-sphingosylphosphoethanolamine = an N-(acyl)-sphingosyl-1,3-cyclic phosphate + ethanolamine. The catalysed reaction is a 1-acyl-sn-glycero-3-phosphocholine = a 1-acyl-sn-glycero-2,3-cyclic phosphate + choline. The enzyme catalyses a 1-acyl-sn-glycero-3-phosphoethanolamine = a 1-acyl-sn-glycero-2,3-cyclic phosphate + ethanolamine. Dermonecrotic toxins cleave the phosphodiester linkage between the phosphate and headgroup of certain phospholipids (sphingolipid and lysolipid substrates), forming an alcohol (often choline) and a cyclic phosphate. This toxin acts on sphingomyelin (SM). It may also act on ceramide phosphoethanolamine (CPE), lysophosphatidylcholine (LPC) and lysophosphatidylethanolamine (LPE), but not on lysophosphatidylserine (LPS), and lysophosphatidylglycerol (LPG). It acts by transphosphatidylation, releasing exclusively cyclic phosphate products as second products. Induces dermonecrosis, hemolysis, increased vascular permeability, edema, inflammatory response, and platelet aggregation. The protein is Dermonecrotic toxin LspiSicTox-betaIE1ii of Loxosceles spinulosa (Recluse spider).